Here is a 140-residue protein sequence, read N- to C-terminus: Regulator of ribonuclease activity B (140 aa).

A disordered region spans residues 115–140 (FEDPNAQDDDEDDGEAIDEDDNGIRH). The span at 119–140 (NAQDDDEDDGEAIDEDDNGIRH) shows a compositional bias: acidic residues.

It belongs to the RraB family. Interacts with the C-terminal region of Rne.

It is found in the cytoplasm. Functionally, globally modulates RNA abundance by binding to RNase E (Rne) and regulating its endonucleolytic activity. Can modulate Rne action in a substrate-dependent manner by altering the composition of the degradosome. The protein is Regulator of ribonuclease activity B of Pantoea ananatis (strain LMG 20103).